Here is a 632-residue protein sequence, read N- to C-terminus: MAU2 chromatid cohesion factor homolog (632 aa).

TPR repeat units lie at residues 453–486 (GGFY…ANAE) and 493–526 (SCSL…ASKI).

This sequence belongs to the SCC4/mau-2 family. As to quaternary structure, interacts with Nipped-B to form the cohesin loading complex.

It localises to the nucleus. The protein resides in the nucleoplasm. Its function is as follows. Required for association of the cohesin complex with chromatin during interphase. Plays a role in sister chromatid cohesion and normal progression through prometaphase. The sequence is that of MAU2 chromatid cohesion factor homolog from Drosophila erecta (Fruit fly).